A 144-amino-acid polypeptide reads, in one-letter code: Large ribosomal subunit protein uL16 (144 aa).

The protein belongs to the universal ribosomal protein uL16 family. As to quaternary structure, part of the 50S ribosomal subunit.

Functionally, binds 23S rRNA and is also seen to make contacts with the A and possibly P site tRNAs. This is Large ribosomal subunit protein uL16 from Thermoanaerobacter sp. (strain X514).